The sequence spans 298 residues: ATP phosphoribosyltransferase (298 aa).

Belongs to the ATP phosphoribosyltransferase family. Long subfamily. Mg(2+) is required as a cofactor.

It localises to the cytoplasm. The enzyme catalyses 1-(5-phospho-beta-D-ribosyl)-ATP + diphosphate = 5-phospho-alpha-D-ribose 1-diphosphate + ATP. It participates in amino-acid biosynthesis; L-histidine biosynthesis; L-histidine from 5-phospho-alpha-D-ribose 1-diphosphate: step 1/9. Its activity is regulated as follows. Feedback inhibited by histidine. Catalyzes the condensation of ATP and 5-phosphoribose 1-diphosphate to form N'-(5'-phosphoribosyl)-ATP (PR-ATP). Has a crucial role in the pathway because the rate of histidine biosynthesis seems to be controlled primarily by regulation of HisG enzymatic activity. The protein is ATP phosphoribosyltransferase of Aliivibrio salmonicida (strain LFI1238) (Vibrio salmonicida (strain LFI1238)).